Reading from the N-terminus, the 69-residue chain is Magnetosome protein MamI (69 aa).

The Cytoplasmic segment spans residues 1–2; it reads MP. A helical transmembrane segment spans residues 3–23; sequence SVIFGLLALAIGLLGLTAWWW. Residues 24–31 lie on the Lumenal side of the membrane; that stretch reads SVTEFLRG. The chain crosses the membrane as a helical span at residues 32 to 52; it reads AVPVALIIFGLVALAAGVQSV. Residues 53-69 are Cytoplasmic-facing; that stretch reads RVPPAGKRANSDPNIDG.

The protein belongs to the magnetosome MamI protein family.

The protein resides in the magnetosome membrane. Functionally, may be involved in an early stage of magnetosome nucleation. Not essential for formation of magnetosome membrane vesicles, it is probably functionally redundant with other proteins. May bind magnetite. One of 7 genes (mamLQBIEMO) able to induce magnetosome membrane biogenesis; coexpression of mamLQRBIEMO in a deletion of the 17 gene mamAB operon restores magnetosome vesicle formation but not magnetite biosynthesis. The chain is Magnetosome protein MamI from Magnetospirillum gryphiswaldense (strain DSM 6361 / JCM 21280 / NBRC 15271 / MSR-1).